Reading from the N-terminus, the 501-residue chain is Pyruvate kinase (501 aa).

Residue R50 participates in substrate binding. K(+) is bound by residues N52, S54, D85, and T86. 52 to 55 (NFSH) provides a ligand contact to ATP. Residues R92 and K178 each coordinate ATP. E243 lines the Mg(2+) pocket. Substrate is bound by residues G266, D267, and T299. Mg(2+) is bound at residue D267.

The protein belongs to the pyruvate kinase family. As to quaternary structure, homotetramer. Requires Mg(2+) as cofactor. K(+) serves as cofactor.

The enzyme catalyses pyruvate + ATP = phosphoenolpyruvate + ADP + H(+). Its pathway is carbohydrate degradation; glycolysis; pyruvate from D-glyceraldehyde 3-phosphate: step 5/5. In Lachancea kluyveri (strain ATCC 58438 / CBS 3082 / BCRC 21498 / NBRC 1685 / JCM 7257 / NCYC 543 / NRRL Y-12651) (Yeast), this protein is Pyruvate kinase (PYK1).